The sequence spans 894 residues: Disease resistance protein SUMM2 (894 aa).

The stretch at 31–71 (ELSKNVVAMKKDMEVLKKKRDDVKRRVDIEEFTRRRERLSQ) forms a coiled coil. One can recognise an NB-ARC domain in the interval 140 to 443 (TLATPIARIE…CEGFIDENES (304 aa)). Residue 183–190 (GMGGVGKT) coordinates ATP. 7 LRR repeats span residues 517 to 538 (SVRRMSLMENEIEILSGSPECL), 539 to 561 (ELTTLFLQKNDSLLHISDEFFRC), 564 to 586 (MLVVLDLSGNSSLRKLPNQISKL), 588 to 610 (SLRYLDLSWTYIKRLPVGLQELK), 611 to 633 (KLRYLRLDYMKRLKSISGISNIS), 634 to 656 (SLRKLQLLQSKMSLDMSLVEELQ), and 660 to 681 (HLEVLNISIKSSLVVEKLLNAP).

Belongs to the disease resistance NB-LRR family. In terms of assembly, interacts with PAT1.

With respect to regulation, negatively regulated by the MEKK1-MKK1-MKK2-MPK4 kinase cascade. In terms of biological role, disease resistance protein that mediates defense responses against the bacterial pathogen Pseudomonas syringae pv tomato strain DC3000, and the virulent oomycete Hyaloperonospora arabidopsidis isolate Noco2. Becomes active when the MEKK1-MKK1-MKK2-MPK4 kinase cascade is disrupted by the microbial effector hopAI1. Does not seem to be required for the activation of MPK4 by flg22, or flg22-induced up-regulation of PAD3. Functions downstream of MEKK2/SUMM1 in immune responses, including cell death and defense responses. In Arabidopsis thaliana (Mouse-ear cress), this protein is Disease resistance protein SUMM2.